The sequence spans 117 residues: Ribosome-binding factor A (117 aa).

This sequence belongs to the RbfA family. As to quaternary structure, monomer. Binds 30S ribosomal subunits, but not 50S ribosomal subunits or 70S ribosomes.

The protein resides in the cytoplasm. Its function is as follows. One of several proteins that assist in the late maturation steps of the functional core of the 30S ribosomal subunit. Associates with free 30S ribosomal subunits (but not with 30S subunits that are part of 70S ribosomes or polysomes). Required for efficient processing of 16S rRNA. May interact with the 5'-terminal helix region of 16S rRNA. This chain is Ribosome-binding factor A, found in Nitrosomonas europaea (strain ATCC 19718 / CIP 103999 / KCTC 2705 / NBRC 14298).